Consider the following 160-residue polypeptide: S-ribosylhomocysteine lyase (160 aa).

Positions 57, 61, and 127 each coordinate Fe cation.

The protein belongs to the LuxS family. Homodimer. It depends on Fe cation as a cofactor.

The enzyme catalyses S-(5-deoxy-D-ribos-5-yl)-L-homocysteine = (S)-4,5-dihydroxypentane-2,3-dione + L-homocysteine. Its function is as follows. Involved in the synthesis of autoinducer 2 (AI-2) which is secreted by bacteria and is used to communicate both the cell density and the metabolic potential of the environment. The regulation of gene expression in response to changes in cell density is called quorum sensing. Catalyzes the transformation of S-ribosylhomocysteine (RHC) to homocysteine (HC) and 4,5-dihydroxy-2,3-pentadione (DPD). The chain is S-ribosylhomocysteine lyase from Streptococcus uberis (strain ATCC BAA-854 / 0140J).